Here is a 177-residue protein sequence, read N- to C-terminus: Shikimate kinase (177 aa).

An ATP-binding site is contributed by 14-19; sequence GSGKST. Ser18 is a Mg(2+) binding site. Residues Asp36, Arg60, and Gly82 each contribute to the substrate site. Arg120 lines the ATP pocket. Residue Arg139 participates in substrate binding.

It belongs to the shikimate kinase family. In terms of assembly, monomer. It depends on Mg(2+) as a cofactor.

It is found in the cytoplasm. It catalyses the reaction shikimate + ATP = 3-phosphoshikimate + ADP + H(+). It participates in metabolic intermediate biosynthesis; chorismate biosynthesis; chorismate from D-erythrose 4-phosphate and phosphoenolpyruvate: step 5/7. In terms of biological role, catalyzes the specific phosphorylation of the 3-hydroxyl group of shikimic acid using ATP as a cosubstrate. The protein is Shikimate kinase of Gloeobacter violaceus (strain ATCC 29082 / PCC 7421).